The sequence spans 510 residues: Beta-glucosidase 26 (510 aa).

The first 27 residues, 1 to 27 (MRKFIAALRLALAAAAHLLLTLPPAQC), serve as a signal peptide directing secretion. Gln-59 serves as a coordination point for a beta-D-glucoside. N-linked (GlcNAc...) asparagine glycans are attached at residues Asn-87 and Asn-127. A beta-D-glucoside-binding positions include His-160 and 205-206 (NE). The active-site Proton donor is the Glu-206. Residues Cys-225 and Cys-228 are joined by a disulfide bond. Asn-233 is a glycosylation site (N-linked (GlcNAc...) asparagine). The a beta-D-glucoside site is built by Tyr-345 and Glu-416. The active-site Nucleophile is Glu-416. Asn-424 carries N-linked (GlcNAc...) asparagine glycosylation. A beta-D-glucoside is bound by residues Trp-463, 470–471 (EW), and Phe-479.

It belongs to the glycosyl hydrolase 1 family.

It carries out the reaction Hydrolysis of terminal, non-reducing beta-D-glucosyl residues with release of beta-D-glucose.. In terms of biological role, hydrolyzes p-nitrophenyl beta-D-glucoside, p-nitrophenyl beta-D-mannoside, p-nitrophenyl beta-D-galactoside, p-nitrophenyl beta-D-xyloside, p-nitrophenyl beta-D-fucoside, p-nitrophenyl beta-L-arabinoside, cello-oligosaccharides, laminari-oligosaccharides and sophorose. The sequence is that of Beta-glucosidase 26 (BGLU26) from Oryza sativa subsp. japonica (Rice).